Reading from the N-terminus, the 334-residue chain is MYLCLESLQKSEFANQRWSLVDTSIETFKAPPENTLKKRGQHVTVIYDQNAMNSMVYTLWKEVYYVDETETWHKTSSDLDYDGIFYIDNQGNKIYYVNFQDDAALYSNSGMGQVHFESKVLSPSVTSSLRVGSTGGQRGTQTGDHARGRSRPSPRSSRDARGRQQRAQSSSRSRSRSRSRSPTKGPHSSGRDTRLPSPGRPPGGRRRGTPERERCPGTPTPPTPDQVGGRSSTPKRQASSRLAQLIDAAYDPPVLLLQGAANTLKCFRRRATQAHPHKFLCMSTSWTWVSKTSPLKSGHRMLIAFSNSEQRNCFLASVRLPKGVSAVKGALDGL.

The segment at 1 to 127 is transactivation domain; sequence MYLCLESLQK…SKVLSPSVTS (127 aa). The interval 127–240 is disordered; the sequence is SSLRVGSTGG…SSTPKRQASS (114 aa). A compositionally biased stretch (polar residues) spans 229–240; it reads GRSSTPKRQASS. Positions 251-334 are DNA-binding domain; the sequence is DPPVLLLQGA…SAVKGALDGL (84 aa).

Belongs to the papillomaviridae E2 protein family. In terms of assembly, binds DNA as homodimer. Interacts with protein E1; this interaction greatly increases E1 DNA-binding activity. Interacts with protein L1; this interaction enhances E2-dependent replication and transcription activation. Interacts with protein L2; this interaction inhibits E2 transcriptional activity but not DNA replication function E2. Interacts with protein E7; this interaction inhibits E7 oncogenic activity. Interacts with host TAF1; this interaction modulates E2-dependent transcriptional regulation. Interacts with host BRD4; this interaction mediates E2 transcriptional activation function. Additionally, the interaction with host BRD4 on mitotic chromosomes mediates tethering of the viral genome. Interacts with host TOPBP1; this interaction is required for optimal viral DNA replication. Phosphorylated.

The protein localises to the host nucleus. In terms of biological role, plays a role in the initiation of viral DNA replication. A dimer of E2 interacts with a dimer of E1 in order to improve specificity of E1 DNA binding activity. Once the complex recognizes and binds DNA at specific sites, the E2 dimer is removed from DNA. E2 also regulates viral transcription through binding to the E2RE response element (5'-ACCNNNNNNGGT-3') present in multiple copies in the regulatory regions of the viral genome. Activates or represses transcription depending on E2RE's position with regards to proximal promoter elements including the TATA-box. Repression occurs by sterically hindering the assembly of the transcription initiation complex. This chain is Regulatory protein E2, found in Bos taurus (Bovine).